The chain runs to 185 residues: Ribosome-recycling factor (185 aa).

Belongs to the RRF family.

Its subcellular location is the cytoplasm. In terms of biological role, responsible for the release of ribosomes from messenger RNA at the termination of protein biosynthesis. May increase the efficiency of translation by recycling ribosomes from one round of translation to another. This chain is Ribosome-recycling factor, found in Alcanivorax borkumensis (strain ATCC 700651 / DSM 11573 / NCIMB 13689 / SK2).